We begin with the raw amino-acid sequence, 151 residues long: Sperm surface protein Sp17 (151 aa).

Basic and acidic residues predominate over residues 68–98; it reads FYNNHAFEEQEPPEKSDPKQEESQIPGKEEE. Disordered regions lie at residues 68–115 and 130–151; these read FYNN…EKEE and AREE…EENK. The IQ domain occupies 114–143; that stretch reads EEVAAVKIQAAFRGHVAREEVKKMKTDSLQ.

In terms of assembly, homodimer. May interact with ROPN1. Testis- and sperm-specific.

The protein localises to the membrane. Functionally, sperm surface zona pellucida binding protein. Helps to bind spermatozoa to the zona pellucida with high affinity. Might function in binding zona pellucida and carbohydrates. The sequence is that of Sperm surface protein Sp17 (SPA17) from Macaca fascicularis (Crab-eating macaque).